The following is a 256-amino-acid chain: 7-cyano-7-deazaguanine synthase (256 aa).

Positions 1–22 are disordered; it reads MTDASADALTSPSNSGASQDTS. Residues 8–22 are compositionally biased toward polar residues; sequence ALTSPSNSGASQDTS. 30-40 provides a ligand contact to ATP; the sequence is LSGGLDSVTCL. Residues Cys-220, Cys-230, Cys-233, and Cys-236 each contribute to the Zn(2+) site.

Belongs to the QueC family. It depends on Zn(2+) as a cofactor.

The enzyme catalyses 7-carboxy-7-deazaguanine + NH4(+) + ATP = 7-cyano-7-deazaguanine + ADP + phosphate + H2O + H(+). It functions in the pathway purine metabolism; 7-cyano-7-deazaguanine biosynthesis. Catalyzes the ATP-dependent conversion of 7-carboxy-7-deazaguanine (CDG) to 7-cyano-7-deazaguanine (preQ(0)). This is 7-cyano-7-deazaguanine synthase from Psychrobacter sp. (strain PRwf-1).